The chain runs to 553 residues: HTH-type transcriptional regulator SgrR (553 aa).

The 113-residue stretch at Met-1–Arg-113 folds into the HTH marR-type domain. The H-T-H motif DNA-binding region spans Leu-26 to His-49. A solute-binding region spans residues Glu-163 to Trp-494.

Functionally, activates the small RNA gene sgrS under glucose-phosphate stress conditions as well as yfdZ. Represses its own transcription under both stress and non-stress conditions. Might act as a sensor of the intracellular accumulation of phosphoglucose by binding these molecules in its C-terminal solute-binding domain. In Yersinia pestis bv. Antiqua (strain Antiqua), this protein is HTH-type transcriptional regulator SgrR.